The sequence spans 181 residues: UPF0301 protein COXBURSA331_A2219 (181 aa).

The protein belongs to the UPF0301 (AlgH) family.

The chain is UPF0301 protein COXBURSA331_A2219 from Coxiella burnetii (strain RSA 331 / Henzerling II).